A 1407-amino-acid polypeptide reads, in one-letter code: DNA-directed RNA polymerase subunit beta' (1407 aa).

Cys70, Cys72, Cys85, and Cys88 together coordinate Zn(2+). 3 residues coordinate Mg(2+): Asp460, Asp462, and Asp464. Lys972 is modified (N6-acetyllysine).

It belongs to the RNA polymerase beta' chain family. The RNAP catalytic core consists of 2 alpha, 1 beta, 1 beta' and 1 omega subunit. When a sigma factor is associated with the core the holoenzyme is formed, which can initiate transcription. It depends on Mg(2+) as a cofactor. The cofactor is Zn(2+).

The enzyme catalyses RNA(n) + a ribonucleoside 5'-triphosphate = RNA(n+1) + diphosphate. DNA-dependent RNA polymerase catalyzes the transcription of DNA into RNA using the four ribonucleoside triphosphates as substrates. In Escherichia coli O6:K15:H31 (strain 536 / UPEC), this protein is DNA-directed RNA polymerase subunit beta'.